Consider the following 845-residue polypeptide: MFGLSKMLRVGEGRAVKRLQKIADQVIALEDQYANLTDEELKAKTEEFKDRLAQGETLDDIFLDAFATAREASWRVLGQKHYKVQIMGGAALHFGNVAEMRTGEGKTLTCVLPAYLNALEGKGVHVVTVNDYLAKRDAEWMGRVHRWLGLSVGVILSELRPAERKVAYDCDITYGTNNELGFDYLRDNMARSLNDLVQRGHHYAIVDEVDSILIDEARTPLIISGPVDGSSQWYNVFAQIVPQLTRDIHYEVDHRKKTVGIKEEGVEKVEDLLGIENLYAPEHSQLVSYLNNAIKAEELFERDKDYIVRNGEVMIVDGFTGRVLAGRRYNEGMHQAIEAKEKVEIKNENQTLATVTLQNYFRLYEKLSGMTGTAETEAAELHQIYKLDVIQIPTNRENQRDDLTDLVYKTQEAKFAAVVDDIAERIANGQPVLVGTVSVERSEYLSQLLTRRGIKHNVLNAKHHEQEAQIVAQAGLPGAVTVATNMAGRGTDIVLGGNPDILLDIKLRERGLDPFEDEEAYQVAWEEELPKMKQRCEERAEKVREAGGLYVLGTERHESRRIDNQLRGRAGRQGDPGATRFYLSMRDDLMVRFVGPTMENMMNRLNVPDDVPIESKTVTNSIKGAQAQVENQNFEMRKNVLKYDEVMNEQRKVIYSERREILESSDISHYIKNMVDETISAYVAAATANGYVEDWDLDKLWNALEALYGPTFTWQSLVDGSEYGAPGELSAEDLRTALLEDARAEYAKLEEAVTALGGEAQMRNIERMVLMPVIDQKWREHLYEMDYLKEGIGLRAMAQRDPLVEYQKEGGDMFNAMKEAIKEETVRQLFLMRKQFVKQDEEANA.

ATP contacts are provided by residues glutamine 85, 103 to 107 (GEGKT), and aspartate 492.

It belongs to the SecA family. Monomer and homodimer. Part of the essential Sec protein translocation apparatus which comprises SecA, SecYEG and auxiliary proteins SecDF. Other proteins may also be involved.

The protein resides in the cell membrane. Its subcellular location is the cytoplasm. The enzyme catalyses ATP + H2O + cellular proteinSide 1 = ADP + phosphate + cellular proteinSide 2.. Its function is as follows. Part of the Sec protein translocase complex. Interacts with the SecYEG preprotein conducting channel. Has a central role in coupling the hydrolysis of ATP to the transfer of proteins into and across the cell membrane, serving as an ATP-driven molecular motor driving the stepwise translocation of polypeptide chains across the membrane. The chain is Protein translocase subunit SecA 1 from Corynebacterium efficiens (strain DSM 44549 / YS-314 / AJ 12310 / JCM 11189 / NBRC 100395).